Here is a 152-residue protein sequence, read N- to C-terminus: Transcriptional regulator MraZ (152 aa).

2 SpoVT-AbrB domains span residues alanine 5–glutamate 52 and alanine 81–serine 124.

Belongs to the MraZ family. Forms oligomers.

The protein resides in the cytoplasm. It is found in the nucleoid. This Shewanella baltica (strain OS195) protein is Transcriptional regulator MraZ.